Consider the following 296-residue polypeptide: Probable endonuclease 4 (296 aa).

Zn(2+) is bound by residues histidine 68, histidine 109, glutamate 144, aspartate 178, histidine 181, histidine 213, aspartate 226, histidine 228, and glutamate 258.

It belongs to the AP endonuclease 2 family. Requires Zn(2+) as cofactor.

The enzyme catalyses Endonucleolytic cleavage to 5'-phosphooligonucleotide end-products.. Endonuclease IV plays a role in DNA repair. It cleaves phosphodiester bonds at apurinic or apyrimidinic (AP) sites, generating a 3'-hydroxyl group and a 5'-terminal sugar phosphate. This is Probable endonuclease 4 from Pediococcus pentosaceus (strain ATCC 25745 / CCUG 21536 / LMG 10740 / 183-1w).